Here is a 357-residue protein sequence, read N- to C-terminus: Glutamine synthetase root isozyme 5 (357 aa).

Residues 19–99 (IIAEYIWVGG…VMCDCYTPQG (81 aa)) form the GS beta-grasp domain. One can recognise a GS catalytic domain in the interval 106–357 (KRYKAATVFS…ADTTILWKGN (252 aa)).

Belongs to the glutamine synthetase family. As to quaternary structure, homooctamer. As to expression, found mainly in the cortical tissues of seedling roots, stem and seedling shoot.

The protein resides in the cytoplasm. It carries out the reaction L-glutamate + NH4(+) + ATP = L-glutamine + ADP + phosphate + H(+). Functionally, plays a role in the flow of nitrogen into nitrogenous organic compounds. This chain is Glutamine synthetase root isozyme 5 (GS1-5), found in Zea mays (Maize).